We begin with the raw amino-acid sequence, 110 residues long: Cyclin-dependent protein kinase inhibitor SMR8 (110 aa).

Interacts with CDKA-1 and D-type cyclins. As to expression, expressed in the root vascular tissue.

Its function is as follows. Probable cyclin-dependent protein kinase (CDK) inhibitor that functions as a repressor of mitosis in the endoreduplication cell cycle. This is Cyclin-dependent protein kinase inhibitor SMR8 from Arabidopsis thaliana (Mouse-ear cress).